A 373-amino-acid chain; its full sequence is Dual-specificity RNA methyltransferase RlmN (373 aa).

Glu-94 acts as the Proton acceptor in catalysis. The 240-residue stretch at 100 to 339 folds into the Radical SAM core domain; that stretch reads EDDRATLCVS…VIVRKTRGDD (240 aa). Residues Cys-107 and Cys-344 are joined by a disulfide bond. Residues Cys-114, Cys-118, and Cys-121 each coordinate [4Fe-4S] cluster. S-adenosyl-L-methionine contacts are provided by residues 168–169, Ser-200, 222–224, and Asn-301; these read GE and SIH. The active-site S-methylcysteine intermediate is Cys-344.

Belongs to the radical SAM superfamily. RlmN family. Requires [4Fe-4S] cluster as cofactor.

The protein resides in the cytoplasm. It carries out the reaction adenosine(2503) in 23S rRNA + 2 reduced [2Fe-2S]-[ferredoxin] + 2 S-adenosyl-L-methionine = 2-methyladenosine(2503) in 23S rRNA + 5'-deoxyadenosine + L-methionine + 2 oxidized [2Fe-2S]-[ferredoxin] + S-adenosyl-L-homocysteine. It catalyses the reaction adenosine(37) in tRNA + 2 reduced [2Fe-2S]-[ferredoxin] + 2 S-adenosyl-L-methionine = 2-methyladenosine(37) in tRNA + 5'-deoxyadenosine + L-methionine + 2 oxidized [2Fe-2S]-[ferredoxin] + S-adenosyl-L-homocysteine. Functionally, specifically methylates position 2 of adenine 2503 in 23S rRNA and position 2 of adenine 37 in tRNAs. m2A2503 modification seems to play a crucial role in the proofreading step occurring at the peptidyl transferase center and thus would serve to optimize ribosomal fidelity. This chain is Dual-specificity RNA methyltransferase RlmN, found in Shewanella sp. (strain MR-4).